The chain runs to 106 residues: uncharacterized protein (106 aa).

This is an uncharacterized protein from Pseudanabaena tenuis (strain PCC 7409).